We begin with the raw amino-acid sequence, 165 residues long: NADPH-dependent 7-cyano-7-deazaguanine reductase (165 aa).

The active-site Thioimide intermediate is the C56. D63 acts as the Proton donor in catalysis. Substrate is bound by residues 78-80 and 97-98; these read VES and HE. Residues D163 and R165 each coordinate Mg(2+).

This sequence belongs to the GTP cyclohydrolase I family. QueF type 1 subfamily. Forms an asymmetric tunnel-fold homodecamer of two head-to-head facing pentamers, harboring 10 active sites at the intersubunit interfaces. The cofactor is Does not require a metal cofactor..

It is found in the cytoplasm. It carries out the reaction 7-aminomethyl-7-carbaguanine + 2 NADP(+) = 7-cyano-7-deazaguanine + 2 NADPH + 3 H(+). It participates in tRNA modification; tRNA-queuosine biosynthesis. Its activity is regulated as follows. Activity is strongly inhibited by Cu(2+) and Fe(3+). In terms of biological role, catalyzes the NADPH-dependent reduction of 7-cyano-7-deazaguanine (preQ0) to 7-aminomethyl-7-deazaguanine (preQ1), a late step in the queuosine pathway. The sequence is that of NADPH-dependent 7-cyano-7-deazaguanine reductase (queF) from Bacillus subtilis (strain 168).